Consider the following 644-residue polypeptide: MDDPEGTNGVGAGCTGWFEVEAVIERRTGDNISDDEDETADDSGTDLIEFIDDSVQSTTQAEAEAARALFNVQEGVDDINAVCALKRKFAACSESAVEDCVDRAANVCVSWKYKNKECTHRKRKIIELEDSGYGNTEVETEQMAHQVESQNGDADLNDSESSGVGASSDVSSETDVDSCNTVPLQNISNILHNSNTKATLLYKFKEAYGVSFMELVRPFKSDKTSCTDWCITGYGISPSVAESLKVLIKQHSIYTHLQCLTCDRGIILLLLIRFKCSKNRLTVAKLMSNLLSIPETCMIIEPPKLRSQACALYWFRTAMSNISDVQGTTPEWIDRLTVLQHSFNDDIFDLSEMIQWAYDNDITDDSDIAYKYAQLADVNSNAAAFLRSNAQAKIVKDCGVMCRHYKRAEKRGMTMGQWIQSRCEKTNDGGNWRPIVQFLRYQNIEFTAFLVAFKQFLQGVPKKSCMLLCGPANTGKSYFGMSLIHFLKGCIISYVNSKSHFWLQPLSDAKLGMIDDVTAISWTYIDDYMRNALDGNDISIDVKHRALVQLKCPPLIITSNTNAGKDSRWPYLHSRLTVFEFNNPFPFDANGNPVYKINDENWKSFFSRTWCKLGLIEEEDKENDGGNISTFKCSAGQNPRHIRS.

A Nuclear localization signal motif is present at residues K86 to K88. A disordered region spans residues Q146–D177. Over residues S159–E173 the composition is skewed to low complexity. Residues C179–D345 form a DNA-binding region region. Residues I444 to V594 enclose the SF3 helicase domain. G470–S477 is a binding site for ATP. Residue K551 forms a Glycyl lysine isopeptide (Lys-Gly) (interchain with G-Cter in SUMO) linkage.

This sequence belongs to the papillomaviridae E1 protein family. As to quaternary structure, can form hexamers. Interacts with E2 protein; this interaction increases E1 DNA binding specificity. Interacts with host DNA polymerase subunit POLA2. Interacts with host single stranded DNA-binding protein RPA1. Interacts with host TOP1; this interaction stimulates the enzymatic activity of TOP1. Phosphorylated. In terms of processing, sumoylated.

It is found in the host nucleus. It catalyses the reaction Couples ATP hydrolysis with the unwinding of duplex DNA by translocating in the 3'-5' direction.. The enzyme catalyses ATP + H2O = ADP + phosphate + H(+). In terms of biological role, ATP-dependent DNA 3'-5' helicase required for initiation of viral DNA replication. It forms a complex with the viral E2 protein. The E1-E2 complex binds to the replication origin which contains binding sites for both proteins. During the initial step, a dimer of E1 interacts with a dimer of protein E2 leading to a complex that binds the viral origin of replication with high specificity. Then, a second dimer of E1 displaces the E2 dimer in an ATP-dependent manner to form the E1 tetramer. Following this, two E1 monomers are added to each half of the site, which results in the formation of two E1 trimers on the viral ori. Subsequently, two hexamers will be created. The double hexamer acts as a bi-directional helicase machinery and unwinds the viral DNA and then recruits the host DNA polymerase to start replication. The polypeptide is Replication protein E1 (Homo sapiens (Human)).